Here is an 800-residue protein sequence, read N- to C-terminus: Putative antiporter subunit mnhA2 (800 aa).

21 helical membrane-spanning segments follow: residues 3-23 (LVYL…TLFI), 29-49 (FAGY…LAQI), 78-98 (GLGL…FFYA), 109-129 (LPRF…IVVS), 133-153 (ILMY…ISYW), 167-187 (FIIT…LYII), 202-222 (SISE…GAFT), 249-269 (SATM…ILGL), 273-293 (YIYI…VTAL), 300-320 (GILA…VGLG), 337-357 (LILF…CALF), 387-407 (LVMT…GFLS), 428-448 (LTII…VYAV), 472-492 (PWLF…IFFI), 527-547 (GVNL…ILAL), 596-616 (IITV…VGLP), 627-647 (GPLE…LVFI), 651-671 (LTMV…FLLM), 676-696 (LALT…VSFS), 712-732 (TIKI…IFIA), and 768-788 (LDTM…YTLL).

It belongs to the CPA3 antiporters (TC 2.A.63) subunit A family. As to quaternary structure, may form a heterooligomeric complex that consists of seven subunits: mnhA2, mnhB2, mnhC2, mnhD2, mnhE2, mnhF2 and mnhG2.

It localises to the cell membrane. This Staphylococcus haemolyticus (strain JCSC1435) protein is Putative antiporter subunit mnhA2 (mnhA2).